Reading from the N-terminus, the 637-residue chain is GTP-binding protein 4 (637 aa).

Alanine 2 carries the N-acetylalanine modification. Lysine 103 carries the post-translational modification N6-acetyllysine; alternate. Lysine 103 participates in a covalent cross-link: Glycyl lysine isopeptide (Lys-Gly) (interchain with G-Cter in SUMO2); alternate. Serine 122 carries the phosphoserine modification. Residues 169-340 form the OBG-type G domain; sequence RTLLLCGYPN…VKTEACDRLL (172 aa). Residues 175-182, 221-225, and 289-292 contribute to the GTP site; these read GYPNVGKS, DTPGI, and SKCE. Lysine 332 is covalently cross-linked (Glycyl lysine isopeptide (Lys-Gly) (interchain with G-Cter in SUMO2)). 2 disordered regions span residues 499 to 518 and 525 to 637; these read SKEK…KVQR and MRSL…KERR. Lysine 535 is covalently cross-linked (Glycyl lysine isopeptide (Lys-Gly) (interchain with G-Cter in SUMO2)). Positions 542–555 are enriched in basic residues; the sequence is VRARRSRSVTRKRK. Serine 559 is modified (phosphoserine). Positions 563 to 574 are enriched in low complexity; the sequence is SSIARSRSRSCS. Positions 576–588 are enriched in basic and acidic residues; sequence TPRDVSGLRDVKM. A compositionally biased stretch (basic residues) spans 589–607; it reads VKKAKTMMKKAQKKMNRLG. Positions 608–621 are enriched in basic and acidic residues; sequence KKGEADRHVFDMKP. The span at 622 to 637 shows a compositional bias: basic residues; sequence KHLLSGKRKAGKKERR.

This sequence belongs to the TRAFAC class OBG-HflX-like GTPase superfamily. OBG GTPase family. NOG subfamily. Associates with pre-60S ribosomal particles. Interacts with MINAS-60 (product of an alternative open reading frame of RBM10).

The protein localises to the nucleus. It localises to the nucleolus. Involved in the biogenesis of the 60S ribosomal subunit. Acts as TP53 repressor, preventing TP53 stabilization and cell cycle arrest. The chain is GTP-binding protein 4 (Gtpbp4) from Rattus norvegicus (Rat).